The primary structure comprises 178 residues: Caveolin-1 (178 aa).

S2 carries the post-translational modification N-acetylserine. A Phosphoserine modification is found at S2. The tract at residues 2-94 (SGGKYVDSEG…WKASFTTFTV (93 aa)) is required for homooligomerization. Over 2 to 104 (SGGKYVDSEG…TKYWFYRLLS (103 aa)) the chain is Cytoplasmic. Position 5 is an N6-acetyllysine; alternate (K5). K5 participates in a covalent cross-link: Glycyl lysine isopeptide (Lys-Gly) (interchain with G-Cter in ubiquitin); alternate. A Phosphotyrosine modification is found at Y6. At S9 the chain carries Phosphoserine. Y14 is subject to Phosphotyrosine; by ABL1. Residue Y25 is modified to Phosphotyrosine. Residues K26 and K30 each participate in a glycyl lysine isopeptide (Lys-Gly) (interchain with G-Cter in ubiquitin) cross-link. S37 is modified (phosphoserine). Residues K39, K47, and K57 each participate in a glycyl lysine isopeptide (Lys-Gly) (interchain with G-Cter in ubiquitin) cross-link. The interaction with CAVIN3 stretch occupies residues 82–94 (DGIWKASFTTFTV). Residues 105–125 (ALFGIPMALIWGIYFAILSFL) constitute an intramembrane region (helical). The Cytoplasmic segment spans residues 126–178 (HIWAVVPCIKSFLIEIQCISRVYSIYIHTVCDPLFEAIGKIFSNVRISLQKEI). The segment at 131–142 (VPCIKSFLIEIQ) is interacts with SPRY1, SPRY2, SPRY3 and SPRY4. 3 S-palmitoyl cysteine lipidation sites follow: C133, C143, and C156. Residues 149–160 (SIYIHTVCDPLF) are interacts with SPRY1, SPRY2, and SPRY4. Positions 167–178 (FSNVRISLQKEI) are interacts with SPRY1, SPRY2, SPRY3 and SPRY4.

Belongs to the caveolin family. Homooligomer. Interacts with GLIPR2. Interacts with NOSTRIN. Interacts with SNAP25 and STX1A. Interacts (via the N-terminus) with DPP4; the interaction is direct. Interacts with CTNNB1, CDH1 and JUP. Interacts with PACSIN2; this interaction induces membrane tubulation. Interacts with SLC7A9. Interacts with BMX and BTK. Interacts with TGFBR1. Interacts with CAVIN3 (via leucine-zipper domain) in a cholesterol-sensitive manner. Interacts with CAVIN1. Interacts with EHD2 in a cholesterol-dependent manner. Forms a ternary complex with UBXN6 and VCP; mediates CAV1 targeting to lysosomes for degradation. Interacts with ABCG1; this interaction regulates ABCG1-mediated cholesterol efflux. Interacts with NEU3; this interaction enhances NEU3 sialidase activity within caveola. Interacts (via C-terminus) with SPRY1, SPRY2 (via C-terminus), SPRY3, and SPRY4. Interacts with IGFBP5; this interaction allows trafficking of IGFBP5 from the plasma membrane to the nucleus. Post-translationally, phosphorylated at Tyr-14 by ABL1 in response to oxidative stress. In terms of processing, ubiquitinated. Undergo monoubiquitination and multi- and/or polyubiquitination. Monoubiquitination of N-terminal lysines promotes integration in a ternary complex with UBXN6 and VCP which promotes oligomeric CAV1 targeting to lysosomes for degradation. Ubiquitinated by ZNRF1; leading to degradation and modulation of the TLR4-mediated immune response.

Its subcellular location is the golgi apparatus membrane. It is found in the cell membrane. The protein resides in the membrane. It localises to the caveola. The protein localises to the membrane raft. May act as a scaffolding protein within caveolar membranes. Forms a stable heterooligomeric complex with CAV2 that targets to lipid rafts and drives caveolae formation. Mediates the recruitment of CAVIN proteins (CAVIN1/2/3/4) to the caveolae. Interacts directly with G-protein alpha subunits and can functionally regulate their activity. Involved in the costimulatory signal essential for T-cell receptor (TCR)-mediated T-cell activation. Its binding to DPP4 induces T-cell proliferation and NF-kappa-B activation in a T-cell receptor/CD3-dependent manner. Recruits CTNNB1 to caveolar membranes and may regulate CTNNB1-mediated signaling through the Wnt pathway. Negatively regulates TGFB1-mediated activation of SMAD2/3 by mediating the internalization of TGFBR1 from membrane rafts leading to its subsequent degradation. Binds 20(S)-hydroxycholesterol (20(S)-OHC). The sequence is that of Caveolin-1 (CAV1) from Aotus nancymaae (Ma's night monkey).